Here is a 27-residue protein sequence, read N- to C-terminus: Protein YkiD (27 aa).

The chain is Protein YkiD from Escherichia coli (strain K12).